The primary structure comprises 847 residues: MFKCWSVVLVLGFIFLESEGRPTKEGGYGLKSYQPLMRLRHKQEKNQESSRVKGFMIQDGPFGSCENKYCGLGRHCVTSRETGQAECACMDLCKRHYKPVCGSDGEFYENHCEVHRAACLKKQKITIVHNEDCFFKGDKCKTTEYSKMKNMLLDLQNQKYIMQENENPNGDDISRKKLLVDQMFKYFDADSNGLVDINELTQVIKQEELGKDLFDCTLYVLLKYDDFNADKHLALEEFYRAFQVIQLSLPEDQKLSITAATVGQSAVLSCAIQGTLRPPIIWKRNNIILNNLDLEDINDFGDDGSLYITKVTTTHVGNYTCYADGYEQVYQTHIFQVNVPPVIRVYPESQAREPGVTASLRCHAEGIPKPQLGWLKNGIDITPKLSKQLTLQANGSEVHISNVRYEDTGAYTCIAKNEAGVDEDISSLFVEDSARKTLANILWREEGLGIGNMFYVFYEDGIKVIQPIECEFQRHIKPSEKLLGFQDEVCPKAEGDEVQRCVWASAVNVKDKFIYVAQPTLDRVLIVDVQSQKVVQAVSTDPVPVKLHYDKSHDQVWVLSWGTLEKTSPTLQVITLASGNVPHHTIHTQPVGKQFDRVDDFFIPTTTLIITHMRFGFILHKDEAALQKIDLETMSYIKTINLKDYKCVPQSLAYTHLGGYYFIGCKPDSTGAVSPQVMVDGVTDSVIGFNSDVTGTPYVSPDGHYLVSINDVKGLVRVQYITIRGEIQEAFDIYTNLHISDLAFQPSFTEAHQYNIYGSSSTQTDVLFVELSSGKVKMIKSLKEPLKAEEWPWNRKNRQIQDSGLFGQYLMTPSKDSLFILDGRLNKLNCEITEVEKGNTVIWVGDA.

An N-terminal signal peptide occupies residues 1 to 20 (MFKCWSVVLVLGFIFLESEG). The Kazal-like domain maps to 83 to 135 (GQAECACMDLCKRHYKPVCGSDGEFYENHCEVHRAACLKKQKITIVHNEDCFF). Disulfide bonds link cysteine 89–cysteine 119, cysteine 93–cysteine 112, and cysteine 101–cysteine 133. EF-hand domains lie at 175–210 (RKKL…EELG) and 211–246 (KDLF…QVIQ). 9 residues coordinate Ca(2+): aspartate 188, aspartate 190, asparagine 192, glutamate 199, aspartate 226, asparagine 228, aspartate 230, histidine 232, and glutamate 237. Ig-like domains are found at residues 250-337 (PEDQ…IFQV) and 341-426 (PVIR…EDIS). 2 disulfide bridges follow: cysteine 270–cysteine 321 and cysteine 362–cysteine 413. N-linked (GlcNAc...) asparagine glycans are attached at residues asparagine 318 and asparagine 394.

It localises to the secreted. This Homo sapiens (Human) protein is Follistatin-related protein 5 (FSTL5).